Here is a 276-residue protein sequence, read N- to C-terminus: 2-dehydro-3-deoxyphosphooctonate aldolase (276 aa).

It belongs to the KdsA family.

The protein localises to the cytoplasm. It catalyses the reaction D-arabinose 5-phosphate + phosphoenolpyruvate + H2O = 3-deoxy-alpha-D-manno-2-octulosonate-8-phosphate + phosphate. It participates in carbohydrate biosynthesis; 3-deoxy-D-manno-octulosonate biosynthesis; 3-deoxy-D-manno-octulosonate from D-ribulose 5-phosphate: step 2/3. It functions in the pathway bacterial outer membrane biogenesis; lipopolysaccharide biosynthesis. The sequence is that of 2-dehydro-3-deoxyphosphooctonate aldolase from Xanthomonas campestris pv. campestris (strain 8004).